The sequence spans 60 residues: MDPCECSKTGKCNCGTSCTCTNCSCKCCKKSCCSCCPSGCSKCASGCVCKGNSCDKSCCQ.

Residues M1–C28 are beta. A divalent metal cation contacts are provided by C4, C6, C12, C14, C18, C20, C23, C25, C28, C32, C33, C35, C36, C40, C43, C47, C49, C54, C58, and C59. The alpha stretch occupies residues K29 to Q60.

This sequence belongs to the metallothionein superfamily. Type 1 family.

In terms of biological role, metallothioneins have a high content of cysteine residues that bind various heavy metals. The protein is Metallothionein A (mta) of Cyprinodon sp. (Pupfish).